The following is a 178-amino-acid chain: uncharacterized protein (178 aa).

A signal peptide spans Met1–Ser19. Residues Arg52, Glu60, and Arg94 contribute to the active site.

Belongs to the thermonuclease family.

This is an uncharacterized protein from Haemophilus influenzae (strain ATCC 51907 / DSM 11121 / KW20 / Rd).